We begin with the raw amino-acid sequence, 366 residues long: MISMAEALQRTPLYPLHQGARFTPFGDWEMPLQYSSILQEHQAVRQQVGMFDISHMGKLVLRGEGVLGALQTLVPTNLSQLQPGQAKYTVLLNEAGGIVDDVILYMGDGQVRCIVNAATTAKDWAWFQKYLPASIEVIDESASQVLIALQGPAATATLSPLCDRPLGEIKTYRHAPVNLLGQPAWIARTGYTGEDGWEILVPAELGQQLWQTLLAAGVTPCGLGARDTLRLEAAMLLYGQDMDEQTTPLEAGLDGLIDWQKPDFVGRAALLAQKQQGIERQLVGLELLGKGIARHGYPIYAGAQAVGEVTSGTLSPTLGKAIALGYVFPEFAHIGRELAVQVRDRWVPAVVVPRPFYRRPRSTAKI.

It belongs to the GcvT family. In terms of assembly, the glycine cleavage system is composed of four proteins: P, T, L and H.

It carries out the reaction N(6)-[(R)-S(8)-aminomethyldihydrolipoyl]-L-lysyl-[protein] + (6S)-5,6,7,8-tetrahydrofolate = N(6)-[(R)-dihydrolipoyl]-L-lysyl-[protein] + (6R)-5,10-methylene-5,6,7,8-tetrahydrofolate + NH4(+). The glycine cleavage system catalyzes the degradation of glycine. This is Aminomethyltransferase from Thermosynechococcus vestitus (strain NIES-2133 / IAM M-273 / BP-1).